The chain runs to 367 residues: Cyclin-Y-like protein 1 (367 aa).

Phosphoserine occurs at positions 73, 111, and 118. The Cyclin N-terminal domain occupies 186–291 (EYFKHDPEHK…FLELLQFNIN (106 aa)). At serine 352 the chain carries Phosphoserine.

This sequence belongs to the cyclin family. Cyclin Y subfamily. Interacts with CDK16; this interaction mutually increases the stability of CDK16 and CCNYL1 and increases the kinase activity of CDK16. In terms of tissue distribution, highly expressed in the testis. Largely restricted to germ cells in the testis.

The protein localises to the cell membrane. Functionally, key regulator of Wnt signaling implicated in various biological processes including male fertility, embryonic neurogenesis and cortex development. Activates the cyclin-dependent kinase CDK16, and promotes sperm maturation. In Mus musculus (Mouse), this protein is Cyclin-Y-like protein 1.